The following is a 329-amino-acid chain: Malate dehydrogenase 2 (329 aa).

12–18 serves as a coordination point for NAD(+); that stretch reads GAAGQIA. Arg-93 and Arg-99 together coordinate substrate. Residues Asn-106, Gln-113, and 130-132 contribute to the NAD(+) site; that span reads VGN. 2 residues coordinate substrate: Asn-132 and Arg-163. The Proton acceptor role is filled by His-188.

This sequence belongs to the LDH/MDH superfamily. MDH type 2 family.

It carries out the reaction (S)-malate + NAD(+) = oxaloacetate + NADH + H(+). In terms of biological role, catalyzes the reversible oxidation of malate to oxaloacetate. The polypeptide is Malate dehydrogenase 2 (Burkholderia thailandensis (strain ATCC 700388 / DSM 13276 / CCUG 48851 / CIP 106301 / E264)).